We begin with the raw amino-acid sequence, 94 residues long: Co-chaperonin GroES (94 aa).

It belongs to the GroES chaperonin family. Heptamer of 7 subunits arranged in a ring. Interacts with the chaperonin GroEL.

It is found in the cytoplasm. In terms of biological role, together with the chaperonin GroEL, plays an essential role in assisting protein folding. The GroEL-GroES system forms a nano-cage that allows encapsulation of the non-native substrate proteins and provides a physical environment optimized to promote and accelerate protein folding. GroES binds to the apical surface of the GroEL ring, thereby capping the opening of the GroEL channel. The sequence is that of Co-chaperonin GroES from Bacillus cereus (strain ATCC 14579 / DSM 31 / CCUG 7414 / JCM 2152 / NBRC 15305 / NCIMB 9373 / NCTC 2599 / NRRL B-3711).